A 117-amino-acid chain; its full sequence is Type II secretion system protein I (117 aa).

Residues 1-6 (MKSKRG) constitute a propeptide, leader sequence. N-methylphenylalanine is present on Phe-7. Residues 7 to 27 (FTLLEVLVALAIFATAAISVI) form a helical membrane-spanning segment.

Belongs to the GSP I family. Type II secretion is composed of four main components: the outer membrane complex, the inner membrane complex, the cytoplasmic secretion ATPase and the periplasm-spanning pseudopilus. Interacts with core component EpsG. Cleaved by prepilin peptidase. Post-translationally, methylated by prepilin peptidase at the amino group of the N-terminal phenylalanine once the leader sequence is cleaved by prepilin peptidase.

Its subcellular location is the cell inner membrane. In terms of biological role, component of the type II secretion system required for the energy-dependent secretion of extracellular factors such as proteases and toxins from the periplasm. Part of the pseudopilus tip complex that is critical for the recognition and binding of secretion substrates. In Vibrio cholerae serotype O1 (strain ATCC 39315 / El Tor Inaba N16961), this protein is Type II secretion system protein I (epsI).